The primary structure comprises 567 residues: Low-affinity glucose transporter (567 aa).

Positions 1-24 (MSNQMTDSTSAGSGTEHSVDTNTA) are enriched in polar residues. The interval 1–36 (MSNQMTDSTSAGSGTEHSVDTNTALKAGSPNDLKVS) is disordered. The Cytoplasmic portion of the chain corresponds to 18 to 62 (SVDTNTALKAGSPNDLKVSHEEDLNDLEKTAEETLQQKPAKEYIF). Residues 63-83 (VSLCCVMVAFGGFVFGWDTGT) traverse the membrane as a helical segment. Over 84–113 (ISGFVNQTDFLRRFGQEKADGSHYLSNVRT) the chain is Extracellular. A glycan (N-linked (GlcNAc...) asparagine) is linked at Asn-89. Residues 114–134 (GLIVSIFNIGCAVGGIVLSNI) form a helical membrane-spanning segment. At 135-141 (GDRWGRR) the chain is on the cytoplasmic side. The chain crosses the membrane as a helical span at residues 142 to 162 (IGLITVIIIYVIGIIIQIASV). At 163-167 (DKWYQ) the chain is on the extracellular side. A helical transmembrane segment spans residues 168–188 (YFIGRIISGLGVGGITVLSPM). At 189–199 (LISETAPKHLR) the chain is on the cytoplasmic side. A helical membrane pass occupies residues 200–220 (GTLVSCYQLMITFGIFLGYCT). Topologically, residues 221–234 (NYGTKNYSNSVQWR) are extracellular. The helical transmembrane segment at 235–255 (VPLGLCFAWAIFMVLGMMFVP) threads the bilayer. Over 256-334 (ESARFLVETD…MGIMIQSLQQ (79 aa)) the chain is Cytoplasmic. A helical membrane pass occupies residues 335-354 (LTGDNYFFYYGTTIFQSVGM). The Extracellular portion of the chain corresponds to 355-358 (DDSF). A helical transmembrane segment spans residues 359–379 (ETSIVLGIVNFASTFFALYTV). The Cytoplasmic segment spans residues 380–386 (DHFGRRN). A helical transmembrane segment spans residues 387–407 (CLLYGCVGMVACYVVYASVGV). Residues 408-429 (TRLWPDGPDHPDISSKGAGNCM) are Extracellular-facing. Residues 430–450 (IVFACFYIFCFATTWAPIAYV) traverse the membrane as a helical segment. Residues 451–466 (VISESYPLRVKGKAMA) are Cytoplasmic-facing. Residues 467-487 (IASASNWIWGFLIGFFTPFIT) traverse the membrane as a helical segment. The Extracellular segment spans residues 488–493 (SAIHFY). The chain crosses the membrane as a helical span at residues 494–514 (YGYVFMGCMVFAFFYVYFFVP). The Cytoplasmic segment spans residues 515–567 (ETKGLTLEEVNEMYSEGVLPWKSSSWVPSSRRGAEYDVDALQHDDKPWYKAML).

Belongs to the major facilitator superfamily. Sugar transporter (TC 2.A.1.1) family.

It localises to the membrane. Its function is as follows. Low-affinity glucose transporter. This is Low-affinity glucose transporter (RAG1) from Kluyveromyces lactis (strain ATCC 8585 / CBS 2359 / DSM 70799 / NBRC 1267 / NRRL Y-1140 / WM37) (Yeast).